The chain runs to 477 residues: Ribulose bisphosphate carboxylase large chain (477 aa).

Residues 1–2 constitute a propeptide that is removed on maturation; the sequence is MS. Pro3 carries the N-acetylproline modification. Lys14 is modified (N6,N6,N6-trimethyllysine). The substrate site is built by Asn123 and Thr173. The Proton acceptor role is filled by Lys175. Lys177 contacts substrate. Residues Lys201, Asp203, and Glu204 each contribute to the Mg(2+) site. An N6-carboxylysine modification is found at Lys201. The active-site Proton acceptor is the His294. Substrate-binding residues include Arg295, His327, and Ser379.

The protein belongs to the RuBisCO large chain family. Type I subfamily. Heterohexadecamer of 8 large chains and 8 small chains; disulfide-linked. The disulfide link is formed within the large subunit homodimers. It depends on Mg(2+) as a cofactor. Post-translationally, the disulfide bond which can form in the large chain dimeric partners within the hexadecamer appears to be associated with oxidative stress and protein turnover.

It localises to the plastid. It is found in the chloroplast. The enzyme catalyses 2 (2R)-3-phosphoglycerate + 2 H(+) = D-ribulose 1,5-bisphosphate + CO2 + H2O. It catalyses the reaction D-ribulose 1,5-bisphosphate + O2 = 2-phosphoglycolate + (2R)-3-phosphoglycerate + 2 H(+). RuBisCO catalyzes two reactions: the carboxylation of D-ribulose 1,5-bisphosphate, the primary event in carbon dioxide fixation, as well as the oxidative fragmentation of the pentose substrate in the photorespiration process. Both reactions occur simultaneously and in competition at the same active site. The polypeptide is Ribulose bisphosphate carboxylase large chain (Dioscorea elephantipes (Elephant's foot yam)).